Reading from the N-terminus, the 312-residue chain is Transcription factor Ouib (312 aa).

In terms of domain architecture, ZAD spans 4–79 (IVCRVCGRQK…IKTQTKWLTI (76 aa)). C6, C9, C52, and C55 together coordinate Zn(2+). 5 C2H2-type zinc fingers span residues 167 to 189 (YICE…MRKH), 195 to 217 (FGCK…HRVH), 223 to 245 (FACR…ERTH), 251 to 273 (YVCE…MVIH), and 279 to 303 (FRCD…SMMH).

As to expression, expressed predominantly in the prothoracic gland during embryonic and larval development.

It is found in the nucleus. In terms of biological role, transcription factor required for ecdysteroid production in the prothoracic gland by activating transcription of the ecdysteroid biosynthesis gene spok. Binds to the 5'-AGCTTTATTATTTAG-3' DNA sequence in the spok enhancer region. The protein is Transcription factor Ouib of Drosophila melanogaster (Fruit fly).